The sequence spans 536 residues: Probable serine/threonine-protein kinase DDB_G0268550 (536 aa).

Residues 14–305 enclose the Protein kinase domain; it reads EIIEKNYRKG…IDVLEIHPFL (292 aa). Residues 20–28 and K51 contribute to the ATP site; that span reads YRKGGFSKI. The active-site Proton acceptor is D147. A disordered region spans residues 161-192; it reads DNNNNNNNNNNNNNNNNNNNSNINDDNNNSNS.

It belongs to the protein kinase superfamily. Ser/Thr protein kinase family. Mg(2+) serves as cofactor.

It catalyses the reaction L-seryl-[protein] + ATP = O-phospho-L-seryl-[protein] + ADP + H(+). The catalysed reaction is L-threonyl-[protein] + ATP = O-phospho-L-threonyl-[protein] + ADP + H(+). The chain is Probable serine/threonine-protein kinase DDB_G0268550 from Dictyostelium discoideum (Social amoeba).